A 491-amino-acid polypeptide reads, in one-letter code: Chromosomal replication initiator protein DnaA (491 aa).

A domain I, interacts with DnaA modulators region spans residues 1 to 69; sequence MTTWDKCLKK…TIQECHGNDL (69 aa). The domain II stretch occupies residues 69 to 154; sequence LIIEYSNKKF…KEDEEYSFGL (86 aa). The interval 155-371 is domain III, AAA+ region; that stretch reads PLKEKYVFDS…GALNRVLTTS (217 aa). The ATP site is built by Gly199, Gly201, Lys202, and Thr203. A domain IV, binds dsDNA region spans residues 372 to 491; that stretch reads KFNHKDPTIE…YELLLDKISR (120 aa).

It belongs to the DnaA family. In terms of assembly, oligomerizes as a right-handed, spiral filament on DNA at oriC.

The protein resides in the cytoplasm. Plays an essential role in the initiation and regulation of chromosomal replication. ATP-DnaA binds to the origin of replication (oriC) to initiate formation of the DNA replication initiation complex once per cell cycle. Binds the DnaA box (a 9 base pair repeat at the origin) and separates the double-stranded (ds)DNA. Forms a right-handed helical filament on oriC DNA; dsDNA binds to the exterior of the filament while single-stranded (ss)DNA is stabiized in the filament's interior. The ATP-DnaA-oriC complex binds and stabilizes one strand of the AT-rich DNA unwinding element (DUE), permitting loading of DNA polymerase. After initiation quickly degrades to an ADP-DnaA complex that is not apt for DNA replication. Binds acidic phospholipids. The sequence is that of Chromosomal replication initiator protein DnaA from Francisella tularensis subsp. novicida (strain U112).